The primary structure comprises 429 residues: Glutamate-1-semialdehyde 2,1-aminomutase (429 aa).

Lys267 carries the post-translational modification N6-(pyridoxal phosphate)lysine.

Belongs to the class-III pyridoxal-phosphate-dependent aminotransferase family. HemL subfamily. As to quaternary structure, homodimer. Pyridoxal 5'-phosphate serves as cofactor.

The protein resides in the cytoplasm. It catalyses the reaction (S)-4-amino-5-oxopentanoate = 5-aminolevulinate. The protein operates within porphyrin-containing compound metabolism; protoporphyrin-IX biosynthesis; 5-aminolevulinate from L-glutamyl-tRNA(Glu): step 2/2. The polypeptide is Glutamate-1-semialdehyde 2,1-aminomutase (Stenotrophomonas maltophilia (strain R551-3)).